A 514-amino-acid chain; its full sequence is Peptide chain release factor 3 (514 aa).

The region spanning 8-268 is the tr-type G domain; the sequence is KKRRTFAIIS…TFLKFAPEPH (261 aa). GTP is bound by residues 17-24, 85-89, and 139-142; these read SHPDAGKT, DTPGH, and NKLD.

This sequence belongs to the TRAFAC class translation factor GTPase superfamily. Classic translation factor GTPase family. PrfC subfamily.

Its subcellular location is the cytoplasm. Increases the formation of ribosomal termination complexes and stimulates activities of RF-1 and RF-2. It binds guanine nucleotides and has strong preference for UGA stop codons. It may interact directly with the ribosome. The stimulation of RF-1 and RF-2 is significantly reduced by GTP and GDP, but not by GMP. The protein is Peptide chain release factor 3 of Streptococcus thermophilus (strain ATCC BAA-491 / LMD-9).